The primary structure comprises 742 residues: Zinc finger protein 700 (742 aa).

Residues 1 to 20 (MPCCSHRSCREDPGTSESRE) form a disordered region. Residues 8 to 20 (SCREDPGTSESRE) show a composition bias toward basic and acidic residues. A KRAB domain is found at 24 to 104 (VAFEDVAVNF…KEDSHCGETF (81 aa)). 9 C2H2-type zinc fingers span residues 194-216 (YACK…MVMH), 222-244 (YKCK…ERTH), 250-272 (YECK…ERTH), 278-300 (YECS…ERSH), 306-328 (YQCK…ERTH), 362-384 (YKCK…EKTH), 390-412 (YKCK…ERIH), 418-440 (YECK…GGTH), and 446-468 (YECK…GRTH). The C2H2-type 10; degenerate zinc-finger motif lies at 474–502 (YECKECGKAFRYVKHLQIHERTEKHIRMP). 8 consecutive C2H2-type zinc fingers follow at residues 508–530 (YKCS…EKTH), 536–558 (YECN…ERTH), 564–586 (YECK…ERTH), 592–614 (YECK…GRTH), 620–642 (YECK…ERTH), 648–670 (YECK…ERKH), 676–698 (YECK…ARTH), and 704–726 (YECK…ARTH).

Belongs to the krueppel C2H2-type zinc-finger protein family.

The protein localises to the nucleus. In terms of biological role, may be involved in transcriptional regulation. In Homo sapiens (Human), this protein is Zinc finger protein 700 (ZNF700).